Reading from the N-terminus, the 1452-residue chain is CLIP-associating protein 1 (1452 aa).

HEAT repeat units lie at residues 68-87, 88-124, and 163-200; these read LLGM…RFRS, QIGT…QASN, and LTLS…HVGE. Residues 239–299 form a disordered region; it reads KNFDDEDSVD…GTAKEGAGGV (61 aa). Over residues 253-267 the composition is skewed to low complexity; sequence SSASSSASSKAPQAA. HEAT repeat units lie at residues 407–442 and 443–479; these read HGAE…IRQT and HVPR…EWQT. Disordered stretches follow at residues 545–735 and 771–792; these read SDSI…GISQ and YGMY…ERSY. Over residues 550–569 the composition is skewed to low complexity; the sequence is SLPQSDRSSSSSQESLNRPL. Polar residues predominate over residues 573–597; that stretch reads RSPTGSTVSRASTATSKSTPGSLQR. Low complexity-rich tracts occupy residues 606–621, 645–659, and 668–682; these read AATC…ASAA, QSSG…TPAD, and VVSQ…SSPG. Over residues 715-724 the composition is skewed to polar residues; that stretch reads QGCSRETSPS. A compositionally biased stretch (low complexity) spans 781–792; sequence SDASSACSERSY. Residues 926 to 963 form an HEAT 6 repeat; the sequence is QQFNILMRFIVDQTQTPNLKVKVAILKYIESLARQMDP. The tract at residues 1033–1076 is disordered; the sequence is LKNSSNSSMGSPSNTIGRTPSRHSSSRASPLTSPTNCSHGGLSP. The segment covering 1034 to 1046 has biased composition (low complexity); it reads KNSSNSSMGSPSN. The segment covering 1058–1070 has biased composition (polar residues); sequence SRASPLTSPTNCS. HEAT repeat units lie at residues 1256–1293 and 1374–1411; these read EHFK…NQPA and QILP…VIGE.

This sequence belongs to the CLASP family. In terms of assembly, interacts (via C-terminus) with clip1/clip-170, and cenpe.

It is found in the cytoplasm. The protein localises to the cytoskeleton. The protein resides in the microtubule organizing center. It localises to the centrosome. Its subcellular location is the chromosome. It is found in the centromere. The protein localises to the kinetochore. The protein resides in the spindle. It localises to the golgi apparatus. Its subcellular location is the trans-Golgi network. Its function is as follows. Microtubule plus-end tracking protein that promotes the stabilization of dynamic microtubules during anaphase. Plays a crucial role in chromatin-induced microtubule formation. May also act at microtubule minus ends. May be involved in the nucleation of noncentrosomal microtubules originating from the trans-Golgi network (TGN). This chain is CLIP-associating protein 1, found in Xenopus tropicalis (Western clawed frog).